A 116-amino-acid chain; its full sequence is uncharacterized protein (116 aa).

The 72-residue stretch at 2-73 (DGSVGTGRQV…PKALICGHRD (72 aa)) folds into the N-acetylmuramoyl-L-alanine amidase domain.

It to phage T3 and T7 N-acetylmuramoyl-L-alanine amidases.

This is an uncharacterized protein from Haemophilus influenzae (strain ATCC 51907 / DSM 11121 / KW20 / Rd).